The primary structure comprises 502 residues: Probable glycerol kinase (502 aa).

A substrate-binding site is contributed by T11. R15 is an ATP binding site. Substrate contacts are provided by R85, Y140, and D246. ATP contacts are provided by residues T268, G313, and 416–420 (GMIAN).

Belongs to the FGGY kinase family.

It catalyses the reaction glycerol + ATP = sn-glycerol 3-phosphate + ADP + H(+). The protein operates within polyol metabolism; glycerol degradation via glycerol kinase pathway; sn-glycerol 3-phosphate from glycerol: step 1/1. The protein is Probable glycerol kinase of Caenorhabditis elegans.